The following is a 416-amino-acid chain: uncharacterized protein (416 aa).

Positions 29, 31, 144, 215, and 236 each coordinate Zn(2+).

This sequence belongs to the metallo-dependent hydrolases superfamily. Peptidase M19 family. The cofactor is Zn(2+).

It carries out the reaction an L-aminoacyl-L-amino acid + H2O = 2 an L-alpha-amino acid. This is an uncharacterized protein from Schizosaccharomyces pombe (strain 972 / ATCC 24843) (Fission yeast).